We begin with the raw amino-acid sequence, 41 residues long: Photosystem I reaction center subunit IX (41 aa).

A helical membrane pass occupies residues 7-27 (YLSTVPVVFAIWLTFTAGLII).

The protein belongs to the PsaJ family.

The protein resides in the plastid. It is found in the chloroplast thylakoid membrane. May help in the organization of the PsaE and PsaF subunits. The chain is Photosystem I reaction center subunit IX from Bigelowiella natans (Pedinomonas minutissima).